The sequence spans 150 residues: Transcriptional repressor NrdR (150 aa).

A zinc finger lies at 3-34 (CPFCAFADSKVVDSRPDKEGSTIRRRRECESC). Residues 49 to 139 (PLVIKKDGRR…VYRSFKDITE (91 aa)) form the ATP-cone domain.

Belongs to the NrdR family. Zn(2+) serves as cofactor.

Negatively regulates transcription of bacterial ribonucleotide reductase nrd genes and operons by binding to NrdR-boxes. The sequence is that of Transcriptional repressor NrdR from Geotalea daltonii (strain DSM 22248 / JCM 15807 / FRC-32) (Geobacter daltonii).